Consider the following 223-residue polypeptide: uncharacterized protein (223 aa).

The next 7 membrane-spanning stretches (helical) occupy residues 25–45 (TYFLLSMTLVTSAIAAMATMA), 46–66 (IGISPIVALVMQLAAIGILFF), 78–98 (LVWTFVFTGLMGGALGPMLNF), 105–125 (GPIVIAQALGLTGMVFLGLSA), 140–160 (FLFAGLIIVIVAALINIFVGS), 161–181 (TVAHLAISSVSALVFSGFILF), and 199–219 (ISMYLNILNLFTSLLSILGIM).

It belongs to the BI1 family.

It localises to the cell membrane. This is an uncharacterized protein from Vibrio cholerae serotype O1 (strain ATCC 39315 / El Tor Inaba N16961).